We begin with the raw amino-acid sequence, 246 residues long: MSGHSKWATIKHKKGALDAKRGKIFTRLIKEITISARAGGDPDGNPRLRTAIAAAKAENMPQDNIKRAIQRGTGELPGAVYEEITFEGYGPGGVAVIVEATTDNRNRAVSEIRHAFSKNGGNLGEPNSVRFMFQKKGLIVVSKDAADEEKLMNIVLEAGGDDLNGEGENWEILTEPQAYDAVVQAVRDAGIEPQVAEVTMIASTYTKLEGATANQMMRLLETLEDHDDVQNVYSNFDMEQVEEVAG.

Belongs to the TACO1 family.

It localises to the cytoplasm. The protein is Probable transcriptional regulatory protein ACP_0521 of Acidobacterium capsulatum (strain ATCC 51196 / DSM 11244 / BCRC 80197 / JCM 7670 / NBRC 15755 / NCIMB 13165 / 161).